The sequence spans 123 residues: Small ribosomal subunit protein uS12 (123 aa).

3-methylthioaspartic acid is present on D89.

This sequence belongs to the universal ribosomal protein uS12 family. Part of the 30S ribosomal subunit. Contacts proteins S8 and S17. May interact with IF1 in the 30S initiation complex.

Functionally, with S4 and S5 plays an important role in translational accuracy. In terms of biological role, interacts with and stabilizes bases of the 16S rRNA that are involved in tRNA selection in the A site and with the mRNA backbone. Located at the interface of the 30S and 50S subunits, it traverses the body of the 30S subunit contacting proteins on the other side and probably holding the rRNA structure together. The combined cluster of proteins S8, S12 and S17 appears to hold together the shoulder and platform of the 30S subunit. This Nitrobacter winogradskyi (strain ATCC 25391 / DSM 10237 / CIP 104748 / NCIMB 11846 / Nb-255) protein is Small ribosomal subunit protein uS12.